The following is a 160-amino-acid chain: uncharacterized protein (160 aa).

The N-acetyltransferase domain maps to 5-160 (ISLSFYKPEH…GEQLILHHFL (156 aa)).

This is an uncharacterized protein from Bacillus subtilis (strain 168).